A 430-amino-acid polypeptide reads, in one-letter code: Asparagine--tRNA ligase (430 aa).

It belongs to the class-II aminoacyl-tRNA synthetase family. As to quaternary structure, homodimer.

It is found in the cytoplasm. It catalyses the reaction tRNA(Asn) + L-asparagine + ATP = L-asparaginyl-tRNA(Asn) + AMP + diphosphate + H(+). This is Asparagine--tRNA ligase from Staphylococcus aureus (strain MSSA476).